The sequence spans 363 residues: Histone-lysine N-methyltransferase ASHH3 (363 aa).

An AWS domain is found at 63–114 (DDGIFCSCSSSSPGSSSTVCGSNCHCGMLFSSCSSSCKCGSECNNKPFQQRH). An SET domain is found at 116 to 233 (KKMKLIQTEK…KGEHLTYDYQ (118 aa)). Positions 239 to 255 (ADQDCHCGAVGCRRKLG) constitute a Post-SET domain.

This sequence belongs to the class V-like SAM-binding methyltransferase superfamily. Histone-lysine methyltransferase family. SET2 subfamily.

Its subcellular location is the nucleus. It localises to the chromosome. It is found in the centromere. The enzyme catalyses L-lysyl-[histone] + S-adenosyl-L-methionine = N(6)-methyl-L-lysyl-[histone] + S-adenosyl-L-homocysteine + H(+). Functionally, histone methyltransferase. The protein is Histone-lysine N-methyltransferase ASHH3 (ASHH3) of Arabidopsis thaliana (Mouse-ear cress).